We begin with the raw amino-acid sequence, 928 residues long: ATP-dependent DNA helicase PIF5 (928 aa).

The transit peptide at 1–49 (MLSRLSAVWRPSRVALRIQRVDFTTCGNRLNRSTQPNEPPLVSGIAARS) directs the protein to the mitochondrion. Disordered regions lie at residues 29–141 (RLNR…DVAI) and 176–231 (LRAK…FSDA). Residues 52-61 (AKAEPVEKRG) are compositionally biased toward basic and acidic residues. An ATP-binding site is contributed by 264–271 (GGAGSGKS). Disordered stretches follow at residues 389–421 (PIPP…APSK), 481–513 (KSSA…AAAE), 545–572 (IYPS…EDTM), and 585–607 (STHE…SQPW). Over residues 550 to 566 (NDGSSQQTGSSNGANSV) the composition is skewed to polar residues. Residues 858 to 877 (QAYVALSRSTRLDNIRLLDF) mediate DNA binding. The segment at 898–928 (EELDNEIEDDGTEGDEEALEGDGEYEGEVEE) is disordered.

It belongs to the helicase family. PIF1 subfamily. Monomer. Mg(2+) is required as a cofactor.

It localises to the mitochondrion. The catalysed reaction is Couples ATP hydrolysis with the unwinding of duplex DNA at the replication fork by translocating in the 5'-3' direction. This creates two antiparallel DNA single strands (ssDNA). The leading ssDNA polymer is the template for DNA polymerase III holoenzyme which synthesizes a continuous strand.. The enzyme catalyses ATP + H2O = ADP + phosphate + H(+). DNA-dependent ATPase and 5'-3' DNA helicase required for the maintenance of mitochondrial (kinetoplast) genome stability. Involved in processing of minicircle Okazaki fragments. This is ATP-dependent DNA helicase PIF5 from Trypanosoma brucei brucei (strain 927/4 GUTat10.1).